Reading from the N-terminus, the 248-residue chain is DNA repair protein RecO (248 aa).

Belongs to the RecO family.

Its function is as follows. Involved in DNA repair and RecF pathway recombination. The protein is DNA repair protein RecO of Bartonella tribocorum (strain CIP 105476 / IBS 506).